Here is a 2060-residue protein sequence, read N- to C-terminus: Fatty acid synthase subunit beta (2060 aa).

A disordered region spans residues 1 to 32 (MFPGDMESKASSMNGDQPSSPTPSSSTSVTIP). A compositionally biased stretch (low complexity) spans 18–32 (PSSPTPSSSTSVTIP). The tract at residues 182 to 543 (VYVIFGGQGN…KAGQGVRVIH (362 aa)) is acetyltransferase (AT) domain. Ser301 acts as the For acetyltransferase activity in catalysis. Positions 600–845 (TRLFLQPPIM…LIVATEGAPD (246 aa)) are enoyl reductase (ER) domain. Residues 1157-1640 (DKNLNWAKAL…CTGDRLAVSM (484 aa)) are dehydratase (DH) domain. The region spanning 1549-1661 (FEEQEISFTA…VEVQIHKNMA (113 aa)) is the MaoC-like domain. A malonyl/palmitoyl transferase (MT/PT) domain region spans residues 1679–2043 (LVFTGQGSQK…FNEVLRLTGS (365 aa)). Catalysis depends on Ser1824, which acts as the For malonyltransferase activity.

This sequence belongs to the fungal fatty acid synthetase subunit beta family. [Alpha(6)beta(6)] hexamers of two multifunctional subunits (alpha and beta).

The enzyme catalyses acetyl-CoA + n malonyl-CoA + 2n NADPH + 4n H(+) = a long-chain-acyl-CoA + n CoA + n CO2 + 2n NADP(+).. The catalysed reaction is holo-[ACP] + acetyl-CoA = acetyl-[ACP] + CoA. It carries out the reaction holo-[ACP] + malonyl-CoA = malonyl-[ACP] + CoA. It catalyses the reaction a (3R)-hydroxyacyl-[ACP] = a (2E)-enoyl-[ACP] + H2O. The enzyme catalyses a 2,3-saturated acyl-[ACP] + NAD(+) = a (2E)-enoyl-[ACP] + NADH + H(+). The catalysed reaction is (9Z)-octadecenoyl-[ACP] + H2O = (9Z)-octadecenoate + holo-[ACP] + H(+). Its pathway is mycotoxin biosynthesis. Fatty acid synthase subunit beta; part of the gene cluster that mediates the biosynthesis of gramillins A and B, bicyclic lipopeptides that induce cell death in maize leaves but not in wheat leaves. The nonribosomal peptide synthetase GRA1 incorporates respectively a glutamic adic (Glu), a leucine (Leu), a serine (Ser), a hydroxyglutamine (HOGln), a 2-amino decanoic acid, and 2 cysteins (CysB and CysA). The biosynthesis of 2-amino decanoic acid incorporated in gramillins could be initiated by a fatty acid synthase composed of the alpha and beta subunits FGSG_00036 and FGSG_11656. The cytochrome P450 monooxygenase FGSG_15680 could hydroxylate the fatty acid chain. Subsequent oxidation to the ketone by the oxidoreductase FGSG_00048 and transamination by aminotransferase FGSG_00049 could form 2-amino-decanoic acid. On the other hand, FGSG_15680 could also be responsible for the HO-modified glutamine at the gamma-position. Whether hydroxylation occurs on the fully assembled product or on the Gln residue prior to assembly into the gramillins requires further proof. The thioredoxin FGSG_00043 could also be required for the disulfide-bond formation between CysA and CysB. The specific involvement of the remaining proteins from the cluster is more difficult to discern, but could have broader regulatory (FGSG_00040 and FGSG_11657) or enzymatic functions (FGSG_00044 and FGSG_00045). The final C-domain of GRA1 does not possess the expected sequence of a termination CT domain, often implicated in macrocyclization and release of a cyclopeptidein fungal NRPs; and the thioesterase FGSG_00047 may act in concert with the terminal C-domain of GRA1 to catalyze the formation of the macrocyclic anhydride and release of the products. This chain is Fatty acid synthase subunit beta, found in Gibberella zeae (strain ATCC MYA-4620 / CBS 123657 / FGSC 9075 / NRRL 31084 / PH-1) (Wheat head blight fungus).